The following is a 426-amino-acid chain: UDP-N-acetylglucosamine--N-acetylmuramyl-(pentapeptide) pyrophosphoryl-undecaprenol N-acetylglucosamine transferase (426 aa).

UDP-N-acetyl-alpha-D-glucosamine contacts are provided by residues 28–30 (TGG), Asn-140, Arg-176, Ser-204, Ile-257, and Gln-302. Residues 369 to 388 (AGNGPSGMGNGHSSEQPQER) form a disordered region.

Belongs to the glycosyltransferase 28 family. MurG subfamily.

It localises to the cell inner membrane. The enzyme catalyses di-trans,octa-cis-undecaprenyl diphospho-N-acetyl-alpha-D-muramoyl-L-alanyl-D-glutamyl-meso-2,6-diaminopimeloyl-D-alanyl-D-alanine + UDP-N-acetyl-alpha-D-glucosamine = di-trans,octa-cis-undecaprenyl diphospho-[N-acetyl-alpha-D-glucosaminyl-(1-&gt;4)]-N-acetyl-alpha-D-muramoyl-L-alanyl-D-glutamyl-meso-2,6-diaminopimeloyl-D-alanyl-D-alanine + UDP + H(+). It functions in the pathway cell wall biogenesis; peptidoglycan biosynthesis. Functionally, cell wall formation. Catalyzes the transfer of a GlcNAc subunit on undecaprenyl-pyrophosphoryl-MurNAc-pentapeptide (lipid intermediate I) to form undecaprenyl-pyrophosphoryl-MurNAc-(pentapeptide)GlcNAc (lipid intermediate II). The polypeptide is UDP-N-acetylglucosamine--N-acetylmuramyl-(pentapeptide) pyrophosphoryl-undecaprenol N-acetylglucosamine transferase (Xanthomonas axonopodis pv. citri (strain 306)).